Here is a 78-residue protein sequence, read N- to C-terminus: Antitoxin VapB2 (78 aa).

Positions 4 to 44 (AKIFMNGQSQAVRLPKEFRFSVKEVSVIPLGKGIVLQPLPN) constitute a SpoVT-AbrB domain.

The protein belongs to the VapB family. Forms complexes with VapC2; probably VapC2(4):VapB2(2) in the absence of DNA, and VapC2(4):VapB2(4) in the presence of DNA. Crystallizes as heterodimers with stoichiometry VapC2(4):VapB2(4) in the presence of its probable promoter DNA. The heterodimers are in contact via alternative VapC-VapC and VapB-VapB interactions. This subunit contacts DNA.

In terms of biological role, antitoxin component of a type II toxin-antitoxin (TA) system. Upon expression in E.coli or S.cerevisiae neutralizes the effect of cognate toxin VapC2, partially inhibits the RNase activity of VapC2. This chain is Antitoxin VapB2 (vapB2), found in Rickettsia felis (strain ATCC VR-1525 / URRWXCal2) (Rickettsia azadi).